Reading from the N-terminus, the 625-residue chain is MAU2 chromatid cohesion factor homolog (625 aa).

3 TPR repeats span residues 96–129 (FDTASLLAQLHLKTEQSSHAKAMLRRAVELSQNN), 451–484 (GGFYYVQGLHAFHKNSFHEAKRFLRETLKMANAE), and 491–524 (SCSLVLLSHVFLSIGNSKESMNMVTPAMQLASKI). Over residues 600–611 (TVPTTETSTSAL) the composition is skewed to polar residues. The interval 600–625 (TVPTTETSTSALQQPQQPAAQFGQFY) is disordered. The segment covering 612–625 (QQPQQPAAQFGQFY) has biased composition (low complexity).

Belongs to the SCC4/mau-2 family. In terms of assembly, interacts with Nipped-B to form the cohesin loading complex.

The protein resides in the nucleus. Its subcellular location is the nucleoplasm. Its function is as follows. Required for association of the cohesin complex with chromatin during interphase. Plays a role in sister chromatid cohesion and normal progression through prometaphase. The chain is MAU2 chromatid cohesion factor homolog from Drosophila mojavensis (Fruit fly).